The primary structure comprises 206 residues: Superoxide dismutase [Mn] (206 aa).

4 residues coordinate Mn(2+): histidine 27, histidine 82, aspartate 168, and histidine 172.

It belongs to the iron/manganese superoxide dismutase family. The cofactor is Mn(2+).

The catalysed reaction is 2 superoxide + 2 H(+) = H2O2 + O2. Destroys superoxide anion radicals which are normally produced within the cells and which are toxic to biological systems. In Lactococcus lactis subsp. lactis (strain IL1403) (Streptococcus lactis), this protein is Superoxide dismutase [Mn] (sodA).